Here is a 455-residue protein sequence, read N- to C-terminus: Anthocyanidin 3-O-glucosyltransferase (455 aa).

H18 serves as the catalytic Proton acceptor. H18 contributes to the an anthocyanidin binding site. D118 functions as the Charge relay in the catalytic mechanism. Position 139 (T139) interacts with UDP-alpha-D-glucose. H148 is a binding site for an anthocyanidin. UDP-alpha-D-glucose-binding residues include A336, Q338, H353, W356, S358, and E361. Residue G376 participates in an anthocyanidin binding. UDP-alpha-D-glucose contacts are provided by D377 and Q378.

The protein belongs to the UDP-glycosyltransferase family.

The catalysed reaction is an anthocyanidin + UDP-alpha-D-glucose + H(+) = an anthocyanidin 3-O-beta-D-glucoside + UDP. Its pathway is pigment biosynthesis; anthocyanin biosynthesis. Its function is as follows. In the presence of other necessary color factors, this glycosylation reaction allows the accumulation of anthocyanin pigments. This Hordeum vulgare (Barley) protein is Anthocyanidin 3-O-glucosyltransferase (BZ1).